Reading from the N-terminus, the 367-residue chain is Putative isomerase YraM (367 aa).

Belongs to the PrpF family.

The sequence is that of Putative isomerase YraM (yraM) from Bacillus subtilis (strain 168).